Consider the following 1537-residue polypeptide: DNA excision repair protein ERCC-6-like 2 (1537 aa).

The region spanning tyrosine 134–glycine 319 is the Helicase ATP-binding domain. Aspartate 147 to threonine 154 lines the ATP pocket. The DEAH box motif lies at aspartate 270–histidine 273. Residues valine 510–lysine 660 form the Helicase C-terminal domain. Disordered regions lie at residues lysine 715–threonine 735 and serine 749–threonine 768. The span at glycine 755 to aspartate 764 shows a compositional bias: basic and acidic residues. Positions proline 772 to serine 783 match the Atypical PIP-box motif. Disordered stretches follow at residues lysine 791–proline 811, serine 833–aspartate 891, and glutamate 918–leucine 948. Residues glutamate 834–leucine 857 show a composition bias toward basic and acidic residues. Phosphoserine occurs at positions 968 and 971. The tract at residues valine 1274 to aspartate 1306 is disordered. Residues lysine 1276 to leucine 1292 are compositionally biased toward basic and acidic residues. Positions asparagine 1295–aspartate 1306 are enriched in polar residues.

The protein belongs to the SNF2/RAD54 helicase family. Interacts with NEK6. Interacts (via an atypical PIP-box) with PCNA; this interaction facilitates cenrtomeric localization of ERCC6L2. Interacts with CYREN; this interaction is DNA independent. Interacts with XRCC6 and XRCC5. Phosphorylated by NEK6.

Its subcellular location is the nucleus. The protein resides in the cytoplasm. The protein localises to the cytoskeleton. It localises to the microtubule organizing center. It is found in the centrosome. Its subcellular location is the mitochondrion. The protein resides in the chromosome. The protein localises to the centromere. Its function is as follows. Promotes double-strand break (DSB) end-joining and facilitates programmed recombination by controlling how DNA ends are joined in a spatially oriented manner during repair. Also plays a role in DNA repair by restricting DNA end resection in double strand break (DSB) repair. Facilitates replication of complex DNA regions and regulates the maintenance of chromatin structure. The sequence is that of DNA excision repair protein ERCC-6-like 2 from Mus musculus (Mouse).